The chain runs to 604 residues: Netrin-1 (604 aa).

The signal sequence occupies residues 1–24 (MMRAVWEALAALAAVACLVGAVRG). The Laminin N-terminal domain occupies 47–284 (HPRRCIPDFV…AVSDLQVGGR (238 aa)). Asn95, Asn116, and Asn131 each carry an N-linked (GlcNAc...) asparagine glycan. Cystine bridges form between Cys119–Cys152, Cys285–Cys294, Cys287–Cys304, Cys306–Cys315, Cys318–Cys338, Cys341–Cys350, Cys343–Cys368, Cys371–Cys380, Cys383–Cys401, Cys404–Cys416, Cys406–Cys423, Cys425–Cys434, Cys437–Cys451, Cys472–Cys544, and Cys491–Cys601. 3 consecutive Laminin EGF-like domains span residues 285 to 340 (CKCN…ECVA), 341 to 403 (CNCN…ACKA), and 404 to 453 (CDCH…PCIK). Asn417 carries N-linked (GlcNAc...) asparagine glycosylation. The NTR domain occupies 472–601 (CDSYCKASKG…FQQREKKGKC (130 aa)). A Cell attachment site motif is present at residues 530 to 532 (RGD).

In terms of assembly, binds to its receptors; DCC, UNC5A, UNC5B, UNC5C and probably UNC5D. Binds to its receptor; DSCAM. Interacts with APP. As to expression, in the embryo, widely expressed in the developing nervous system and in mesodermal tissues.

The protein resides in the secreted. Its subcellular location is the cytoplasm. Netrins control guidance of CNS commissural axons and peripheral motor axons. Its association with either DCC or some UNC5 receptors will lead to axon attraction or repulsion, respectively. Binding to UNC5C might cause dissociation of UNC5C from polymerized TUBB3 in microtubules and thereby lead to increased microtubule dynamics and axon repulsion. Involved in dorsal root ganglion axon projection towards the spinal cord. It also serves as a survival factor via its association with its receptors which prevent the initiation of apoptosis. Involved in colorectal tumorigenesis by regulating apoptosis. This chain is Netrin-1 (Ntn1), found in Mus musculus (Mouse).